The primary structure comprises 782 residues: Cadherin-5 (782 aa).

Positions 1 to 22 (MQVLVMLLAAAGTYLGLLTAPT) are cleaved as a signal peptide. Residues 23 to 44 (AASNPGRQDTPSTLPLHRRQKR) constitute a propeptide that is removed on maturation. Cadherin domains are found at residues 45–148 (DWIW…WPVF), 149–255 (TQLV…FPVF), 256–370 (TQTR…PPNF), 371–475 (KQPF…DNAP), and 476–592 (EFAK…MGAQ). Residues 45–598 (DWIWNQMHID…MGAQVGVSIQ (554 aa)) are Extracellular-facing. The Ca(2+) site is built by E55 and E56. N-linked (GlcNAc...) asparagine glycosylation occurs at N58. Ca(2+) is bound by residues D106, E108, D140, I141, N142, D143, and N144. N-linked (GlcNAc...) asparagine glycosylation is present at N154. Positions 174, 176, 183, and 228 each coordinate Ca(2+). N-linked (GlcNAc...) asparagine glycosylation is found at N360, N440, N522, and N534. Residues 599 to 619 (ALVAIFLCILTIAVISLLVYL) form a helical membrane-spanning segment. A required for interaction with PALS1 region spans residues 620–659 (RRRLRKQARAHGKSVPEIHEQLVTYDEEGGGEMDTTSYDV). Over 620 to 782 (RRRLRKQARA…GSDPREELLY (163 aa)) the chain is Cytoplasmic.

Part of a complex composed of AMOTL2, MAGI1 and CDH5, within the complex AMOTL2 acts as a scaffold protein for the interaction of MAGI1 with CDH5. The complex is required for coupling actin fibers to cell junctions in endothelial cells. Within the complex AMOTL2 (via its N-terminus) interacts with CDH5. Interacts (via cadherin 5 domain) with PTPRB. Interacts with TRPC4. Interacts with KRIT1. Interacts with PARD3. Interacts with RTN4 (isoform B). Interacts with PALS1; the interaction promotes PALS1 localization to cell junctions and is required for CDH5-mediated vascular lumen formation and endothelial cell. Interacts with CTNND1/p120-catenin; the interaction controls CADH5 endocytosis. Phosphorylated on tyrosine residues by KDR/VEGFR-2. Dephosphorylated by PTPRB. In terms of processing, O-glycosylated.

Its subcellular location is the cell junction. It is found in the adherens junction. The protein localises to the cell membrane. The protein resides in the cytoplasm. Its function is as follows. Cadherins are calcium-dependent cell adhesion proteins. They preferentially interact with themselves in a homophilic manner in connecting cells; cadherins may thus contribute to the sorting of heterogeneous cell types. This cadherin may play a important role in endothelial cell biology through control of the cohesion and organization of the intercellular junctions. It associates with alpha-catenin forming a link to the cytoskeleton. Plays a role in coupling actin fibers to cell junctions in endothelial cells, via acting as a cell junctional complex anchor for AMOTL2 and MAGI1. Acts in concert with KRIT1 and PALS1 to establish and maintain correct endothelial cell polarity and vascular lumen. These effects are mediated by recruitment and activation of the Par polarity complex and RAP1B. Required for activation of PRKCZ and for localization of phosphorylated PRKCZ, PARD3, TIAM1 and RAP1B to the cell junction. Associates with CTNND1/p120-catenin to control CADH5 endocytosis. The protein is Cadherin-5 of Sus scrofa (Pig).